The primary structure comprises 366 residues: 5-hydroxytryptamine receptor 1F (366 aa).

Over 1–24 the chain is Extracellular; that stretch reads MDFLNSSDQNLTSEELLNRMPSKI. N-linked (GlcNAc...) asparagine glycans are attached at residues N5 and N10. A helical membrane pass occupies residues 25 to 49; the sequence is LVSLTLSGLALMTTTINSLVIAAII. The Cytoplasmic segment spans residues 50 to 59; it reads VTRKLHHPAN. Residues 60–81 traverse the membrane as a helical segment; that stretch reads YLICSLAVTDFLVAVLVMPFSI. Residues 82-96 lie on the Extracellular side of the membrane; sequence VYIVRESWIMGQVVC. A disulfide bond links C96 and C172. A helical membrane pass occupies residues 97–119; it reads DIWLSVDITCCTCSILHLSAIAL. Serotonin-binding residues include D103 and C107. A DRY motif; important for ligand-induced conformation changes motif is present at residues 120–122; it reads DRY. Topologically, residues 120–139 are cytoplasmic; sequence DRYRAITDAVEYARKRTPKH. A helical transmembrane segment spans residues 140-159; it reads AGIMITIVWIISVFISMPPL. Topologically, residues 160–178 are extracellular; that stretch reads FWRHQGTSRDDECIIKHDH. The helical transmembrane segment at 179 to 202 threads the bilayer; sequence IVSTIYSTFGAFYIPLALILILYY. The Cytoplasmic segment spans residues 203-291; it reads KIYRAAKTLY…KISGTRERKA (89 aa). Residues 292-315 traverse the membrane as a helical segment; the sequence is ATTLGLILGAFVICWLPFFVKELV. Residues 316 to 327 lie on the Extracellular side of the membrane; that stretch reads VNVCDKCKISEE. A helical membrane pass occupies residues 328 to 350; that stretch reads MSNFLAWLGYLNSLINPLIYTIF. The NPxxY motif; important for ligand-induced conformation changes and signaling motif lies at 343 to 347; the sequence is NPLIY. Topologically, residues 351 to 366 are cytoplasmic; sequence NEDFKKAFQKLVRCRC.

This sequence belongs to the G-protein coupled receptor 1 family.

It localises to the cell membrane. G-protein coupled receptor for 5-hydroxytryptamine (serotonin). Also functions as a receptor for various alkaloids and psychoactive substances. Receptor for lasmiditan, a drug for the treatment of acute migraine. Ligand binding causes a conformation change that triggers signaling via guanine nucleotide-binding proteins (G proteins) and modulates the activity of downstream effectors, such as adenylate cyclase. HTR1F is coupled to G(i)/G(o) G alpha proteins and mediates inhibitory neurotransmission by inhibiting adenylate cyclase activity. This Homo sapiens (Human) protein is 5-hydroxytryptamine receptor 1F.